A 197-amino-acid chain; its full sequence is Thymidylate kinase (197 aa).

7 to 14 (GIDGSGKS) provides a ligand contact to ATP.

It belongs to the thymidylate kinase family.

The enzyme catalyses dTMP + ATP = dTDP + ADP. Functionally, phosphorylation of dTMP to form dTDP in both de novo and salvage pathways of dTTP synthesis. The protein is Thymidylate kinase (tmk) of Thermotoga maritima (strain ATCC 43589 / DSM 3109 / JCM 10099 / NBRC 100826 / MSB8).